Reading from the N-terminus, the 380-residue chain is Cytochrome b (380 aa).

4 helical membrane passes run 34 to 54, 78 to 99, 114 to 134, and 179 to 199; these read FGSLLGICLITQILTGLLLAM, WLIRNLHANGASFFFICIYFHI, WNTGIILLLTLMATAFVGYVL, and FFALHFLLPFMITGLTLIHLT. Heme b is bound by residues H84 and H98. Heme b-binding residues include H183 and H197. H202 contacts a ubiquinone. 4 helical membrane passes run 227-247, 289-309, 321-341, and 348-368; these read TKDILGFALMLLPLTTLALFS, LGGVLALAASVLILFLSPLLH, LSQLLFWTLVANLLILTWIGS, and FIIIGQLASTTYFIILLILFP.

It belongs to the cytochrome b family. In terms of assembly, the cytochrome bc1 complex contains 11 subunits: 3 respiratory subunits (MT-CYB, CYC1 and UQCRFS1), 2 core proteins (UQCRC1 and UQCRC2) and 6 low-molecular weight proteins (UQCRH/QCR6, UQCRB/QCR7, UQCRQ/QCR8, UQCR10/QCR9, UQCR11/QCR10 and a cleavage product of UQCRFS1). This cytochrome bc1 complex then forms a dimer. It depends on heme b as a cofactor.

The protein localises to the mitochondrion inner membrane. Component of the ubiquinol-cytochrome c reductase complex (complex III or cytochrome b-c1 complex) that is part of the mitochondrial respiratory chain. The b-c1 complex mediates electron transfer from ubiquinol to cytochrome c. Contributes to the generation of a proton gradient across the mitochondrial membrane that is then used for ATP synthesis. The chain is Cytochrome b (MT-CYB) from Pygoscelis papua (Gentoo penguin).